The following is a 322-amino-acid chain: Interferon regulatory factor 1 (322 aa).

Residues 5 to 113 (RMRMRPWLEM…SAVRVYRMLP (109 aa)) constitute a DNA-binding region (IRF tryptophan pentad repeat). N6-acetyllysine is present on Lys-78. Residues 92–164 (EEVKDQSRNK…STLPDDHSNY (73 aa)) form a disordered region. The segment covering 146 to 157 (DTFSDGLSSSTL) has biased composition (polar residues). Glycyl lysine isopeptide (Lys-Gly) (interchain with G-Cter in SUMO) cross-links involve residues Lys-276 and Lys-296.

Belongs to the IRF family. Monomer. Homodimer. Interacts with EP300. Interacts with MYD88. Interacts with PIAS3. Interacts with SPOP. Phosphorylated by CK2 and this positively regulates its activity. In terms of processing, sumoylation represses the transcriptional activity and displays enhanced resistance to protein degradation. Sumoylated by UBE2I/UBC9 and SUMO1. Inactivates the tumor suppressor activity. Elevated levels in tumor cells. Major site is Lys-276. Sumoylation is enhanced by PIAS3. Desumoylated by SENP1 in tumor cells and appears to compete with ubiquitination on C-terminal sites. Post-translationally, ubiquitinated in a SPOP-depedent manner. Appears to compete with sumoylation on C-terminal sites.

The protein resides in the nucleus. The protein localises to the cytoplasm. Activated by MYD88. Its function is as follows. Transcriptional regulator which displays a remarkable functional diversity in the regulation of cellular responses. Regulates transcription of IFN and IFN-inducible genes, host response to viral and bacterial infections, regulation of many genes expressed during hematopoiesis, inflammation, immune responses and cell proliferation and differentiation, regulation of the cell cycle and induction of growth arrest and programmed cell death following DNA damage. Stimulates both innate and acquired immune responses through the activation of specific target genes and can act as a transcriptional activator and repressor regulating target genes by binding to an interferon-stimulated response element (ISRE) in their promoters. Has an essentail role in IFNG-dependent immunity to mycobacteria. Binds to a consensus sequence in gene promoters. Its target genes for transcriptional activation activity include: genes involved in anti-viral response, such as IFN-alpha/beta, RIGI, TNFSF10/TRAIL, ZBP1, OAS1/2, PIAS1/GBP, EIF2AK2/PKR and RSAD2/viperin; antibacterial response, such as GBP2, GBP5 and NOS2/INOS; anti-proliferative response, such as p53/TP53, LOX and CDKN1A; apoptosis, such as BBC3/PUMA, CASP1, CASP7 and CASP8; immune response, such as IL7, IL12A/B and IL15, PTGS2/COX2 and CYBB; DNA damage responses and DNA repair, such as POLQ/POLH; MHC class I expression, such as TAP1, PSMB9/LMP2, PSME1/PA28A, PSME2/PA28B and B2M and MHC class II expression, such as CIITA; metabolic enzymes, such as ACOD1/IRG1. Represses genes involved in anti-proliferative response, such as BIRC5/survivin, CCNB1, CCNE1, CDK1, CDK2 and CDK4 and in immune response, such as FOXP3, IL4, ANXA2 and TLR4. Stimulates p53/TP53-dependent transcription through enhanced recruitment of EP300 leading to increased acetylation of p53/TP53. Plays an important role in immune response directly affecting NK maturation and activity, macrophage production of IL12, Th1 development and maturation of CD8+ T-cells. Also implicated in the differentiation and maturation of dendritic cells and in the suppression of regulatory T (Treg) cells development. Acts as a tumor suppressor and plays a role not only in antagonism of tumor cell growth but also in stimulating an immune response against tumor cells. The polypeptide is Interferon regulatory factor 1 (IRF1) (Bos taurus (Bovine)).